The following is a 289-amino-acid chain: Protease HtpX (289 aa).

2 consecutive transmembrane segments (helical) span residues 7-27 (LFLL…NIIF) and 38-58 (GGIL…SLFM). A Zn(2+)-binding site is contributed by H144. E145 is an active-site residue. Zn(2+) is bound at residue H148. The next 2 helical transmembrane spans lie at 155-175 (VTMT…SRII) and 194-214 (LVFW…ATMI). Zn(2+) is bound at residue E223.

Belongs to the peptidase M48B family. Zn(2+) is required as a cofactor.

The protein resides in the cell inner membrane. This Actinobacillus pleuropneumoniae serotype 5b (strain L20) protein is Protease HtpX.